A 219-amino-acid polypeptide reads, in one-letter code: Protein-L-isoaspartate O-methyltransferase 2 (219 aa).

The active site involves S67.

It belongs to the methyltransferase superfamily. L-isoaspartyl/D-aspartyl protein methyltransferase family.

It is found in the cytoplasm. It carries out the reaction [protein]-L-isoaspartate + S-adenosyl-L-methionine = [protein]-L-isoaspartate alpha-methyl ester + S-adenosyl-L-homocysteine. Functionally, catalyzes the methyl esterification of L-isoaspartyl residues in peptides and proteins that result from spontaneous decomposition of normal L-aspartyl and L-asparaginyl residues. It plays a role in the repair and/or degradation of damaged proteins. The chain is Protein-L-isoaspartate O-methyltransferase 2 from Nitrosococcus oceani (strain ATCC 19707 / BCRC 17464 / JCM 30415 / NCIMB 11848 / C-107).